We begin with the raw amino-acid sequence, 374 residues long: MRAVIVAVGVAFLVSLFCTPIAIRVFTRLKAGQPIRAEGPVMHQGKKGTPTMGGVVFILATVIAYVAGHLALTTLPDAQIAQVEPTITALVLLGLMVFSGAVGFIDDFLKVRKRHSGGLNKRGKLLGQILVGAVFGVIALYFPSTMTDAQGTLTNTETVGSTTLSFIRDIPALELTKVGAVVLFIFVVMAATNGVNLTDGLDGLATGASVMVLAAYALIAFWQYRHWCADPNYTQDYCYSVRDPLEIALIAGAAAGACVGFLWWNTSPARIFMGDTGALGLGGLIAGMAMSTRTILLLPIIGGLFVIITMSVVIQIISFRTTGKRVFRMSPLQHHFELAGWSEVNIVVRFWIIAGIGVAIALGLFYSEFLASVG.

10 helical membrane-spanning segments follow: residues 3–23 (AVIVAVGVAFLVSLFCTPIAI), 52–72 (MGGVVFILATVIAYVAGHLAL), 85–105 (PTITALVLLGLMVFSGAVGFI), 125–145 (LLGQILVGAVFGVIALYFPST), 170–190 (IPALELTKVGAVVLFIFVVMA), 201–221 (LDGLATGASVMVLAAYALIAF), 244–264 (PLEIALIAGAAAGACVGFLWW), 271–291 (IFMGDTGALGLGGLIAGMAMS), 294–314 (TILLLPIIGGLFVIITMSVVI), and 350–370 (FWIIAGIGVAIALGLFYSEFL).

This sequence belongs to the glycosyltransferase 4 family. MraY subfamily. The cofactor is Mg(2+).

It is found in the cell membrane. The enzyme catalyses UDP-N-acetyl-alpha-D-muramoyl-L-alanyl-gamma-D-glutamyl-meso-2,6-diaminopimeloyl-D-alanyl-D-alanine + di-trans,octa-cis-undecaprenyl phosphate = di-trans,octa-cis-undecaprenyl diphospho-N-acetyl-alpha-D-muramoyl-L-alanyl-D-glutamyl-meso-2,6-diaminopimeloyl-D-alanyl-D-alanine + UMP. The protein operates within cell wall biogenesis; peptidoglycan biosynthesis. Functionally, catalyzes the initial step of the lipid cycle reactions in the biosynthesis of the cell wall peptidoglycan: transfers peptidoglycan precursor phospho-MurNAc-pentapeptide from UDP-MurNAc-pentapeptide onto the lipid carrier undecaprenyl phosphate, yielding undecaprenyl-pyrophosphoryl-MurNAc-pentapeptide, known as lipid I. In Salinispora arenicola (strain CNS-205), this protein is Phospho-N-acetylmuramoyl-pentapeptide-transferase.